Here is a 432-residue protein sequence, read N- to C-terminus: Adenylosuccinate synthetase (432 aa).

Residues 13-19 (GDEGKGK) and 41-43 (GHT) each bind GTP. The Proton acceptor role is filled by Asp-14. The Mg(2+) site is built by Asp-14 and Gly-41. IMP contacts are provided by residues 14-17 (DEGK), 39-42 (NAGH), Thr-130, Arg-144, Gln-225, Thr-240, and Arg-304. His-42 serves as the catalytic Proton donor. A substrate-binding site is contributed by 300 to 306 (ATTGRKR). Residues Arg-306, 332 to 334 (KLD), and 415 to 417 (STG) contribute to the GTP site.

The protein belongs to the adenylosuccinate synthetase family. As to quaternary structure, homodimer. It depends on Mg(2+) as a cofactor.

It localises to the cytoplasm. The catalysed reaction is IMP + L-aspartate + GTP = N(6)-(1,2-dicarboxyethyl)-AMP + GDP + phosphate + 2 H(+). Its pathway is purine metabolism; AMP biosynthesis via de novo pathway; AMP from IMP: step 1/2. In terms of biological role, plays an important role in the de novo pathway of purine nucleotide biosynthesis. Catalyzes the first committed step in the biosynthesis of AMP from IMP. The sequence is that of Adenylosuccinate synthetase from Alteromonas mediterranea (strain DSM 17117 / CIP 110805 / LMG 28347 / Deep ecotype).